A 501-amino-acid chain; its full sequence is Sugar phosphate exchanger 3 (501 aa).

The chain crosses the membrane as a helical span at residues 20–40 (CTHHHIVVFLLTFFSYSLLHA). Asn-62 carries N-linked (GlcNAc...) asparagine glycosylation. The next 5 helical transmembrane spans lie at 87 to 107 (TLFL…GLFV), 119 to 139 (WVLS…GTLT), 153 to 173 (LWVV…AVMG), 183 to 203 (FVFG…AFLA), and 214 to 234 (AFLV…CGLL). Asn-273 carries an N-linked (GlcNAc...) asparagine glycan. The next 6 membrane-spanning stretches (helical) occupy residues 298-320 (GVVL…FFWL), 340-360 (IWYD…SDVL), 364-384 (APVL…YSRS), 393-413 (VIMA…SSAI), 435-455 (GIVD…VSLI), and 459-479 (LGWM…ILFI).

This sequence belongs to the major facilitator superfamily. Organophosphate:Pi antiporter (OPA) (TC 2.A.1.4) family.

Its subcellular location is the endoplasmic reticulum membrane. It localises to the lysosome membrane. Its function is as follows. Unlike the other SLC37 members, seems to lack glucose-6-phosphate antiporter activity. This is Sugar phosphate exchanger 3 (SLC37A3) from Gallus gallus (Chicken).